Reading from the N-terminus, the 411-residue chain is Arginine deiminase (411 aa).

Cys-401 functions as the Amidino-cysteine intermediate in the catalytic mechanism.

The protein belongs to the arginine deiminase family.

The protein localises to the cytoplasm. It carries out the reaction L-arginine + H2O = L-citrulline + NH4(+). Its pathway is amino-acid degradation; L-arginine degradation via ADI pathway; carbamoyl phosphate from L-arginine: step 1/2. The polypeptide is Arginine deiminase (Staphylococcus epidermidis (strain ATCC 35984 / DSM 28319 / BCRC 17069 / CCUG 31568 / BM 3577 / RP62A)).